A 218-amino-acid polypeptide reads, in one-letter code: Ras-related protein R-Ras (218 aa).

Residues 1–30 (MSSGAASGTGRGRPRGGGPGPGDPPPSETH) are disordered. Residues 7 to 20 (SGTGRGRPRGGGPG) are compositionally biased toward gly residues. 36-44 (GGGGVGKSA) lines the GTP pocket. The Effector region signature appears at 58 to 66 (YDPTIEDSY). GTP-binding positions include 83-87 (DTAGQ), 142-145 (NKAD), and 172-174 (SAK). Cys215 carries the post-translational modification Cysteine methyl ester. Cys215 carries S-geranylgeranyl cysteine lipidation. The propeptide at 216–218 (VLL) is removed in mature form.

This sequence belongs to the small GTPase superfamily. Ras family. As to quaternary structure, interacts with PLCE1. Interacts (active GTP-bound form preferentially) with RGS14. Interacts with OSBPL3. Interacts with ZDHHC19. In terms of processing, S-palmitoylated by ZDHHC19, leading to increased association with membranes and with rafts/caveolae as well as enhanced cell viability.

Its subcellular location is the cell membrane. The enzyme catalyses GTP + H2O = GDP + phosphate + H(+). Functionally, GTP-binding protein with GTPase activity, likely involved in the regulation of MAPK signaling pathway and thereby controlling multiple cellular processes. Regulates the organization of the actin cytoskeleton. With OSPBL3, modulates integrin beta-1 (ITGB1) activity. The sequence is that of Ras-related protein R-Ras (RRAS) from Homo sapiens (Human).